Here is a 101-residue protein sequence, read N- to C-terminus: Putative pterin-4-alpha-carbinolamine dehydratase (101 aa).

It belongs to the pterin-4-alpha-carbinolamine dehydratase family.

It carries out the reaction (4aS,6R)-4a-hydroxy-L-erythro-5,6,7,8-tetrahydrobiopterin = (6R)-L-erythro-6,7-dihydrobiopterin + H2O. The protein is Putative pterin-4-alpha-carbinolamine dehydratase of Rhizobium johnstonii (strain DSM 114642 / LMG 32736 / 3841) (Rhizobium leguminosarum bv. viciae).